Reading from the N-terminus, the 344-residue chain is RNA 3'-terminal phosphate cyclase (344 aa).

ATP is bound by residues glutamine 103 and 283–287 (HLADQ). Catalysis depends on histidine 308, which acts as the Tele-AMP-histidine intermediate.

Belongs to the RNA 3'-terminal cyclase family. Type 1 subfamily.

It localises to the cytoplasm. It catalyses the reaction a 3'-end 3'-phospho-ribonucleotide-RNA + ATP = a 3'-end 2',3'-cyclophospho-ribonucleotide-RNA + AMP + diphosphate. Functionally, catalyzes the conversion of 3'-phosphate to a 2',3'-cyclic phosphodiester at the end of RNA. The mechanism of action of the enzyme occurs in 3 steps: (A) adenylation of the enzyme by ATP; (B) transfer of adenylate to an RNA-N3'P to produce RNA-N3'PP5'A; (C) and attack of the adjacent 2'-hydroxyl on the 3'-phosphorus in the diester linkage to produce the cyclic end product. The biological role of this enzyme is unknown but it is likely to function in some aspects of cellular RNA processing. This Salmonella paratyphi C (strain RKS4594) protein is RNA 3'-terminal phosphate cyclase.